The chain runs to 211 residues: tRNA (guanine-N(7)-)-methyltransferase (211 aa).

Residues D40, E65, N92, and D117 each contribute to the S-adenosyl-L-methionine site. D117 is a catalytic residue. Substrate is bound at residue K121. The interval 123 to 128 (RHNKRR) is interaction with RNA. D153 contributes to the substrate binding site.

The protein belongs to the class I-like SAM-binding methyltransferase superfamily. TrmB family.

The catalysed reaction is guanosine(46) in tRNA + S-adenosyl-L-methionine = N(7)-methylguanosine(46) in tRNA + S-adenosyl-L-homocysteine. It functions in the pathway tRNA modification; N(7)-methylguanine-tRNA biosynthesis. Functionally, catalyzes the formation of N(7)-methylguanine at position 46 (m7G46) in tRNA. The sequence is that of tRNA (guanine-N(7)-)-methyltransferase from Synechocystis sp. (strain ATCC 27184 / PCC 6803 / Kazusa).